A 349-amino-acid chain; its full sequence is Phenylalanine--tRNA ligase alpha subunit (349 aa).

Glu-259 is a Mg(2+) binding site.

It belongs to the class-II aminoacyl-tRNA synthetase family. Phe-tRNA synthetase alpha subunit type 1 subfamily. Tetramer of two alpha and two beta subunits. The cofactor is Mg(2+).

It is found in the cytoplasm. It catalyses the reaction tRNA(Phe) + L-phenylalanine + ATP = L-phenylalanyl-tRNA(Phe) + AMP + diphosphate + H(+). The sequence is that of Phenylalanine--tRNA ligase alpha subunit from Lactobacillus gasseri (strain ATCC 33323 / DSM 20243 / BCRC 14619 / CIP 102991 / JCM 1131 / KCTC 3163 / NCIMB 11718 / NCTC 13722 / AM63).